A 279-amino-acid chain; its full sequence is Putative pyruvate, phosphate dikinase regulatory protein (279 aa).

153-160 (GVSRTSKT) provides a ligand contact to ADP.

The protein belongs to the pyruvate, phosphate/water dikinase regulatory protein family. PDRP subfamily.

It catalyses the reaction N(tele)-phospho-L-histidyl/L-threonyl-[pyruvate, phosphate dikinase] + ADP = N(tele)-phospho-L-histidyl/O-phospho-L-threonyl-[pyruvate, phosphate dikinase] + AMP + H(+). The catalysed reaction is N(tele)-phospho-L-histidyl/O-phospho-L-threonyl-[pyruvate, phosphate dikinase] + phosphate + H(+) = N(tele)-phospho-L-histidyl/L-threonyl-[pyruvate, phosphate dikinase] + diphosphate. Functionally, bifunctional serine/threonine kinase and phosphorylase involved in the regulation of the pyruvate, phosphate dikinase (PPDK) by catalyzing its phosphorylation/dephosphorylation. This chain is Putative pyruvate, phosphate dikinase regulatory protein, found in Rhodopseudomonas palustris (strain ATCC BAA-98 / CGA009).